Here is a 96-residue protein sequence, read N- to C-terminus: Co-chaperonin GroES (96 aa).

Belongs to the GroES chaperonin family. In terms of assembly, heptamer of 7 subunits arranged in a ring. Interacts with the chaperonin GroEL.

The protein resides in the cytoplasm. Functionally, together with the chaperonin GroEL, plays an essential role in assisting protein folding. The GroEL-GroES system forms a nano-cage that allows encapsulation of the non-native substrate proteins and provides a physical environment optimized to promote and accelerate protein folding. GroES binds to the apical surface of the GroEL ring, thereby capping the opening of the GroEL channel. In Legionella pneumophila (strain Paris), this protein is Co-chaperonin GroES.